The chain runs to 370 residues: MKINNSLLNFVNGMLVTLPSSKTLTLSWNFGSMLGMVLIFQILTGTFLAFYYTPDSLMAFSTVQYIMYEVNFGWVFRIFHFNGASLFFIFLYLHIFKGLFFMSYRLKKVWMSGLTIYLLVMMEAFMGYVLVWAQMSFWAAVVITSLLSVIPIWGPTIVTWIWSGFGVTGATLKFFFVLHFLLPWAILVIVLGHLIFLHSTGSTSSLYCHGDYDKVCFSPEYLGKDAYNIVIWLLFIVLSLIYPFNLGDAEMFIEADPMMSPVHIVPEWYFLFAYAILRAIPNKVLGVIALLMSIVTFYFFALVNNYTSCLTKLNKFLVFMFIISSTILSWLGQCTVEDPFTILSPLFSFIYFGLAYLMLFIFMSSKLLFK.

A run of 4 helical transmembrane segments spans residues 30–50 (FGSM…FLAF), 74–96 (WVFR…LHIF), 109–129 (VWMS…MGYV), and 175–195 (FFVL…GHLI). Residues H80 and H94 each coordinate heme b. 2 residues coordinate heme b: H179 and H193. Residue H198 participates in a ubiquinone binding. Transmembrane regions (helical) follow at residues 221–240 (YLGK…VLSL), 284–304 (VLGV…ALVN), 316–336 (FLVF…QCTV), and 342–362 (ILSP…LFIF).

The protein belongs to the cytochrome b family. As to quaternary structure, the main subunits of complex b-c1 are: cytochrome b, cytochrome c1 and the Rieske protein. Heme b serves as cofactor.

The protein localises to the mitochondrion inner membrane. Its function is as follows. Component of the ubiquinol-cytochrome c reductase complex (complex III or cytochrome b-c1 complex) that is part of the mitochondrial respiratory chain. The b-c1 complex mediates electron transfer from ubiquinol to cytochrome c. Contributes to the generation of a proton gradient across the mitochondrial membrane that is then used for ATP synthesis. The protein is Cytochrome b of Caenorhabditis elegans.